A 338-amino-acid polypeptide reads, in one-letter code: uncharacterized protein (338 aa).

The tract at residues 1–20 (MYNNNQNHHNNDNNMNKDEP) is disordered. The segment covering 9–20 (HNNDNNMNKDEP) has biased composition (basic and acidic residues). 6 N-linked (GlcNAc...) asparagine glycosylation sites follow: asparagine 37, asparagine 83, asparagine 97, asparagine 105, asparagine 114, and asparagine 122. The tract at residues 55-92 (VNSGNNNNNNNNNNNNNNNNNNNNNNNNNDSIVINMDT) is disordered. A compositionally biased stretch (low complexity) spans 59–92 (NNNNNNNNNNNNNNNNNNNNNNNNNDSIVINMDT). The next 3 membrane-spanning stretches (helical) occupy residues 148–168 (YKKF…IVLI), 178–198 (FHAY…FLLI), and 202–222 (ILSI…FLKV). Asparagine 229, asparagine 240, asparagine 286, asparagine 302, asparagine 317, and asparagine 322 each carry an N-linked (GlcNAc...) asparagine glycan. Disordered regions lie at residues 279–303 (SNLN…NSNS) and 316–338 (LNSS…TNEE). A compositionally biased stretch (low complexity) spans 280–294 (NLNRNNNNSNNVNNN). Residues 316 to 327 (LNSSGSNSSIYS) are compositionally biased toward low complexity. The segment covering 328 to 338 (DVQNDIGTNEE) has biased composition (polar residues).

The protein resides in the membrane. This is an uncharacterized protein from Dictyostelium discoideum (Social amoeba).